A 154-amino-acid polypeptide reads, in one-letter code: Pro-corazonin (154 aa).

The first 19 residues, methionine 1–glycine 19, serve as a signal peptide directing secretion. Glutamine 20 is modified (pyrrolidone carboxylic acid). Asparagine 30 is modified (asparagine amide). Positions leucine 70–histidine 154 are excised as a propeptide.

It belongs to the corazonin family. Expression is restricted to 24 neurons in the larval CNS (8 in the brain and 16 in the ventral nerve cord) and 12-16 neurons in the pars lateralis of the adult brain.

The protein resides in the secreted. In terms of biological role, cardioactive peptide. Corazonin is probably involved in the physiological regulation of the heart beat. Clock (Clk) and cycle (cyc) proteins negatively regulate Crz transcription in a cell-specific manner. In Drosophila erecta (Fruit fly), this protein is Pro-corazonin (Crz).